The following is a 637-amino-acid chain: Probable potassium transport system protein Kup 2 (637 aa).

Residues 1-21 (MDLASRDSEAETVEQSSHSGA) are disordered. 12 helical membrane-spanning segments follow: residues 29 to 49 (LMLGALGVVYGDIGTSPIYAF), 68 to 88 (VLSLIVWALTIIVTIKYVAFV), 116 to 136 (LILAIGLCGAALFFGDSIITP), 150 to 170 (VTPTLDPYVVPITLLILAILF), 180 to 200 (VAAVFGPVTALWFLAIGVAGL), 228 to 248 (AAFVTVGAVFLAVTGAEALYV), 258 to 278 (IVLAWFSVVFPCLLLNYFGQG), 300 to 320 (ALMPMVGLATAATVIASQAVI), 359 to 379 (LLVALGVMLLVVGFGSSSSLA), 381 to 401 (AYGISVTGEMLMTTILLFVVM), 409 to 429 (LAVALPLTLLFGIIDSGFFLA), and 434 to 454 (IFEGGWVSITVACLMGLIMWT).

This sequence belongs to the HAK/KUP transporter (TC 2.A.72) family.

Its subcellular location is the cell inner membrane. It carries out the reaction K(+)(in) + H(+)(in) = K(+)(out) + H(+)(out). In terms of biological role, transport of potassium into the cell. Likely operates as a K(+):H(+) symporter. In Mesorhizobium japonicum (strain LMG 29417 / CECT 9101 / MAFF 303099) (Mesorhizobium loti (strain MAFF 303099)), this protein is Probable potassium transport system protein Kup 2.